A 1392-amino-acid chain; its full sequence is DNA-directed RNA polymerase subunit beta (1392 aa).

The protein belongs to the RNA polymerase beta chain family. In terms of assembly, the RNAP catalytic core consists of 2 alpha, 1 beta, 1 beta' and 1 omega subunit. When a sigma factor is associated with the core the holoenzyme is formed, which can initiate transcription.

The catalysed reaction is RNA(n) + a ribonucleoside 5'-triphosphate = RNA(n+1) + diphosphate. DNA-dependent RNA polymerase catalyzes the transcription of DNA into RNA using the four ribonucleoside triphosphates as substrates. This chain is DNA-directed RNA polymerase subunit beta, found in Neisseria gonorrhoeae (strain ATCC 700825 / FA 1090).